Consider the following 219-residue polypeptide: Ran-specific GTPase-activating protein 1 (219 aa).

3 stretches are compositionally biased toward basic and acidic residues: residues 1-12 (MAEVERKEEQAK), 33-45 (AVGDGKEGGEAKK), and 57-72 (PRKDEGKGGEERDNID). A disordered region spans residues 1-72 (MAEVERKEEQ…KGGEERDNID (72 aa)). In terms of domain architecture, RanBD1 spans 70 to 210 (NIDAAEVVEK…YDLGRAHNEK (141 aa)).

The protein belongs to the RANBP1 family.

It is found in the cytoplasm. The protein localises to the nucleus. Important for the export of protein containing nuclear export signal (NES) out of the nucleus. The polypeptide is Ran-specific GTPase-activating protein 1 (YRB1) (Encephalitozoon cuniculi (strain GB-M1) (Microsporidian parasite)).